Consider the following 596-residue polypeptide: Pumilio homolog 12 (596 aa).

Residues 254–596 (LNEDLTMSLN…KVLSALSSKK (343 aa)) enclose the PUM-HD domain. Pumilio repeat units follow at residues 277 to 312 (EARG…MIFN), 313 to 348 (EIID…QIVH), 349 to 388 (SITR…IIIS), 389 to 424 (ALKH…FLFE), 425 to 460 (AAIT…HLVS), 461 to 496 (EIAS…EILE), 497 to 532 (QLEG…RIIR), and 533 to 570 (ELIN…LLVD).

Its subcellular location is the cytoplasm. It is found in the nucleus. Sequence-specific RNA-binding protein that regulates translation and mRNA stability by binding the 3'-UTR of target mRNAs. The sequence is that of Pumilio homolog 12 (APUM12) from Arabidopsis thaliana (Mouse-ear cress).